The sequence spans 234 residues: bZIP transcription factor 1 (234 aa).

Positions 67 to 134 (RAQSDGSNAL…DKQRNAQQQL (68 aa)) are disordered. Polar residues predominate over residues 70-86 (SDGSNALLSSIGPSGTT). Residues 88–128 (RPRDEMDCFTDTHKHKRGDGNKSRRREQCRANQARYRDKQR) show a composition bias toward basic and acidic residues. Residues 106–169 (DGNKSRRREQ…RTNQSPWNTV (64 aa)) form the bZIP domain. The interval 109–128 (KSRRREQCRANQARYRDKQR) is basic motif. The interval 134 to 155 (LERSVEQLQSELSTLKHRNLDL) is leucine-zipper.

It belongs to the bZIP family. In terms of assembly, interacts with PKZ1.

It localises to the nucleus. Required for normal zoospore movement, formation of appressoria by germinated zoospore cysts and plant infection. In Phytophthora infestans (Potato late blight agent), this protein is bZIP transcription factor 1.